A 1033-amino-acid chain; its full sequence is SIT4-associating protein SAP190 (1033 aa).

Disordered stretches follow at residues Asp-32–Ser-82, Pro-147–Thr-213, and Phe-768–Phe-1033. Residues Ile-158–Asp-170 are compositionally biased toward basic and acidic residues. Acidic residues predominate over residues Ala-171–Asn-182. The span at Asp-183–Asp-195 shows a compositional bias: basic and acidic residues. At Ser-774 the chain carries Phosphoserine. Acidic residues-rich tracts occupy residues Ser-784 to Gly-793 and Glu-825 to Asp-838. Phosphoserine is present on residues Ser-857, Ser-862, and Ser-892. Residues Asp-858–Gly-879 show a composition bias toward basic and acidic residues. Residues Ser-909–Phe-924 are compositionally biased toward polar residues. Acidic residues predominate over residues Gly-932 to Asp-944. At Thr-990 the chain carries Phosphothreonine. Position 991 is a phosphoserine (Ser-991). Acidic residues predominate over residues Ile-1000–Asn-1018.

This sequence belongs to the SAPS family. Associates with the SIT4 protein phosphatase catalytic subunit in a cell-cycle-dependent manner. In terms of processing, hyperphosphorylated in the absence of SIT4.

It localises to the cytoplasm. Its function is as follows. Positive regulator of protein phosphatase SIT4. Involved in the general amino acid control (GAAC) response regulated by TOR. Involved in the dephosphorylation of the elongator complex subunit IKI3. This chain is SIT4-associating protein SAP190 (SAP190), found in Saccharomyces cerevisiae (strain ATCC 204508 / S288c) (Baker's yeast).